Here is a 960-residue protein sequence, read N- to C-terminus: Glycine dehydrogenase (decarboxylating) (960 aa).

Residue lysine 709 is modified to N6-(pyridoxal phosphate)lysine.

Belongs to the GcvP family. In terms of assembly, the glycine cleavage system is composed of four proteins: P, T, L and H. Pyridoxal 5'-phosphate serves as cofactor.

It carries out the reaction N(6)-[(R)-lipoyl]-L-lysyl-[glycine-cleavage complex H protein] + glycine + H(+) = N(6)-[(R)-S(8)-aminomethyldihydrolipoyl]-L-lysyl-[glycine-cleavage complex H protein] + CO2. In terms of biological role, the glycine cleavage system catalyzes the degradation of glycine. The P protein binds the alpha-amino group of glycine through its pyridoxal phosphate cofactor; CO(2) is released and the remaining methylamine moiety is then transferred to the lipoamide cofactor of the H protein. The protein is Glycine dehydrogenase (decarboxylating) of Edwardsiella ictaluri (strain 93-146).